Reading from the N-terminus, the 279-residue chain is Tryptophan synthase alpha chain (279 aa).

Active-site proton acceptor residues include Glu50 and Asp61.

The protein belongs to the TrpA family. Tetramer of two alpha and two beta chains.

It catalyses the reaction (1S,2R)-1-C-(indol-3-yl)glycerol 3-phosphate + L-serine = D-glyceraldehyde 3-phosphate + L-tryptophan + H2O. It participates in amino-acid biosynthesis; L-tryptophan biosynthesis; L-tryptophan from chorismate: step 5/5. Functionally, the alpha subunit is responsible for the aldol cleavage of indoleglycerol phosphate to indole and glyceraldehyde 3-phosphate. This is Tryptophan synthase alpha chain from Brucella anthropi (strain ATCC 49188 / DSM 6882 / CCUG 24695 / JCM 21032 / LMG 3331 / NBRC 15819 / NCTC 12168 / Alc 37) (Ochrobactrum anthropi).